The following is a 262-amino-acid chain: RNA-binding protein 7 (262 aa).

Residue Gly2 is modified to N-acetylglycine. In terms of domain architecture, RRM spans 10–87 (RTLFVGNLET…RPIKIQFRAG (78 aa)). 2 ZCCHC8 binding regions span residues 25 to 35 (LLFELFHQAGP) and 59 to 76 (HEVSVPYAMNLLNGIKLF). The segment at 95–121 (VSLSYPQHHVGNSSPTSTSPSRTVDNM) is disordered. Phosphoserine is present on residues Ser133 and Ser134. Omega-N-methylarginine is present on Arg149. 2 disordered regions span residues 159–212 (SPHL…HYSR) and 242–262 (SHDYDNRRDSGRNGKWRSSRH). The segment covering 165–194 (SGFSPSAQSHNHTFNQSSSSQWRQDTPSSQ) has biased composition (polar residues). Phosphoserine is present on Ser201. Residues 242 to 253 (SHDYDNRRDSGR) show a composition bias toward basic and acidic residues.

Component of the nuclear exosome targeting (NEXT) complex composed of MTREX, ZCCHC8, and RBM7 that directs a subset of non-coding short-lived RNAs for exosomal degradation. Interacts with ZCCHC8 and SF3B2/SAP145. Binds to MTREX through ZCCHC8. Interacts with YWHAE and YWHAZ; these interactions are stress-dependent and RBM7 phosphorylation dependent; release RNA from the NEXT complex and may affect RNA targeting to the nuclear RNA exosomome for degradation. Interacts with MEPCE and LARP7, the core subunits of 7SK snRNP; upon genotoxic stress this interaction is enhanced, triggering the release of inactive P-TEFb complex from the core and P-TEFb complex activation. In terms of processing, phosphorylated at Ser-133 by MAPK14/p38-alpha-activated MAPKAPK2/MK2; this phosphorylation is stress-dependent; this phosphorylation decreases its RNA-binding capacity therefore affecting RNA nuclear exosome-mediated degradation. This phosphorylation mediates YWHAE and YWHAZ interactions.

It localises to the nucleus. It is found in the nucleoplasm. In terms of biological role, RNA-binding subunit of the trimeric nuclear exosome targeting (NEXT) complex, a complex that functions as an RNA exosome cofactor that directs a subset of non-coding short-lived RNAs for exosomal degradation. NEXT is involved in surveillance and turnover of aberrant transcripts and non-coding RNAs. Binds preferentially polyuridine sequences and associates with newly synthesized RNAs, including pre-mRNAs and short-lived exosome substrates such as promoter upstream transcripts (PROMPTs), enhancer RNAs (eRNAs), and 3'-extended products from small nuclear RNAs (snRNAs). Participates in several biological processes including DNA damage response (DDR) and stress response. During stress response, activation of the p38MAPK-MK2 pathway decreases RBM7-RNA-binding and subsequently the RNA exosome degradation activities, thereby modulating the turnover of non-coding transcriptome. Participates in DNA damage response (DDR), through its interaction with MEPCE and LARP7, the core subunits of 7SK snRNP complex, that release the positive transcription elongation factor b (P-TEFb) complex from the 7SK snRNP. In turn, activation of P-TEFb complex induces the transcription of P-TEFb-dependent DDR genes to promote cell viability. In Bos taurus (Bovine), this protein is RNA-binding protein 7.